Consider the following 583-residue polypeptide: Probable phosphoglucomutase, cytoplasmic 1 (583 aa).

Residues Arg24 and Ser123 each coordinate alpha-D-glucose 1,6-bisphosphate. The active-site Phosphoserine intermediate is the Ser123. The Mg(2+) site is built by Ser123, Asp299, Asp301, and Asp303. The residue at position 123 (Ser123) is a Phosphoserine. Residues Asp303, Arg304, Thr367, Glu386, Ser388, and Lys399 each contribute to the alpha-D-glucose 1,6-bisphosphate site.

It belongs to the phosphohexose mutase family. Monomer. Requires Mg(2+) as cofactor.

It localises to the cytoplasm. The catalysed reaction is alpha-D-glucose 1-phosphate = alpha-D-glucose 6-phosphate. It carries out the reaction O-phospho-L-seryl-[protein] + alpha-D-glucose 1-phosphate = alpha-D-glucose 1,6-bisphosphate + L-seryl-[protein]. The enzyme catalyses alpha-D-glucose 1,6-bisphosphate + L-seryl-[protein] = O-phospho-L-seryl-[protein] + alpha-D-glucose 6-phosphate. Catalyzes the reversible isomerization of alpha-D-glucose 1-phosphate to alpha-D-glucose 6-phosphate. The mechanism proceeds via the intermediate compound alpha-D-glucose 1,6-bisphosphate. This enzyme participates in both the breakdown and synthesis of glucose. The chain is Probable phosphoglucomutase, cytoplasmic 1 from Arabidopsis thaliana (Mouse-ear cress).